Consider the following 513-residue polypeptide: ATP synthase subunit alpha (513 aa).

An ATP-binding site is contributed by 169 to 176; sequence GDRQTGKT.

It belongs to the ATPase alpha/beta chains family. In terms of assembly, F-type ATPases have 2 components, CF(1) - the catalytic core - and CF(0) - the membrane proton channel. CF(1) has five subunits: alpha(3), beta(3), gamma(1), delta(1), epsilon(1). CF(0) has three main subunits: a(1), b(2) and c(9-12). The alpha and beta chains form an alternating ring which encloses part of the gamma chain. CF(1) is attached to CF(0) by a central stalk formed by the gamma and epsilon chains, while a peripheral stalk is formed by the delta and b chains.

The protein resides in the cell inner membrane. It carries out the reaction ATP + H2O + 4 H(+)(in) = ADP + phosphate + 5 H(+)(out). In terms of biological role, produces ATP from ADP in the presence of a proton gradient across the membrane. The alpha chain is a regulatory subunit. This Shewanella sp. (strain ANA-3) protein is ATP synthase subunit alpha.